The primary structure comprises 124 residues: MNVLTYSSAKKQIIFMALYFVITGIVIRLIGYSLQGSLSAFTQAGIGDLLSGNFSVKDMFHFDFSFDMSQFDGFSLNMWGVFIKDKIHSVVNDMMPTTLGAINMLMLSKYLTLERAIKLGIKLY.

The helical transmembrane segment at 13-33 threads the bilayer; sequence IIFMALYFVITGIVIRLIGYS.

The protein localises to the membrane. This is an uncharacterized protein from Bacillus anthracis.